The sequence spans 264 residues: Thiazole synthase (264 aa).

The Schiff-base intermediate with DXP role is filled by Lys-106. Residues Gly-167, 193 to 194, and 215 to 216 contribute to the 1-deoxy-D-xylulose 5-phosphate site; these read AG and NS.

This sequence belongs to the ThiG family. Homotetramer. Forms heterodimers with either ThiH or ThiS.

Its subcellular location is the cytoplasm. It catalyses the reaction [ThiS sulfur-carrier protein]-C-terminal-Gly-aminoethanethioate + 2-iminoacetate + 1-deoxy-D-xylulose 5-phosphate = [ThiS sulfur-carrier protein]-C-terminal Gly-Gly + 2-[(2R,5Z)-2-carboxy-4-methylthiazol-5(2H)-ylidene]ethyl phosphate + 2 H2O + H(+). The protein operates within cofactor biosynthesis; thiamine diphosphate biosynthesis. Functionally, catalyzes the rearrangement of 1-deoxy-D-xylulose 5-phosphate (DXP) to produce the thiazole phosphate moiety of thiamine. Sulfur is provided by the thiocarboxylate moiety of the carrier protein ThiS. In vitro, sulfur can be provided by H(2)S. The protein is Thiazole synthase of Pseudomonas putida (strain W619).